A 294-amino-acid polypeptide reads, in one-letter code: Sarcotoxin-2A (294 aa).

A signal peptide spans 1–22 (MKSFVFFAACMAIIALSSLVQA). Positions 23–24 (YP) are cleaved as a propeptide — removed by a dipeptidylpeptidase. Gln-25 bears the Pyrrolidone carboxylic acid mark. Arg-293 bears the Arginine amide mark.

The protein belongs to the attacin/sarcotoxin-2 family. Synthesized by the fat body and is eventually secreted into the hemolymph.

It is found in the secreted. In terms of biological role, sarcotoxin II is an antibacterial protein which plays a role in the inflammatory response of this insect. The main effect of sarcotoxin II on E.coli may be the inhibition of cell wall synthesis, including septum formation. The polypeptide is Sarcotoxin-2A (Sarcophaga peregrina (Flesh fly)).